A 466-amino-acid chain; its full sequence is Probable sensor protein PcoS (466 aa).

Over 1 to 10 (MRFKISLTTR) the chain is Cytoplasmic. Residues 11–31 (LSLIFSAVMLTVWWLSSFILI) form a helical membrane-spanning segment. Over 32-171 (STLNDYFDNQ…HTLLMDKLST (140 aa)) the chain is Periplasmic. The helical transmembrane segment at 172-192 (WLFWFNIGLVFISVFLGWLTT) threads the bilayer. The HAMP domain maps to 193-246 (RIGLKPLREMTSLASSMTVHSLDQRLNPDLAPPEISETMQEFNNMFDRLEGAFR). The Cytoplasmic segment spans residues 193 to 466 (RIGLKPLREM…IVFKVRLLMD (274 aa)). In terms of domain architecture, Histidine kinase spans 254–466 (DIAHELRTPV…IVFKVRLLMD (213 aa)). Residue H257 is modified to Phosphohistidine; by autocatalysis.

It is found in the cell inner membrane. The catalysed reaction is ATP + protein L-histidine = ADP + protein N-phospho-L-histidine.. Functionally, probable member of a two-component regulatory system PcoS/PcoR. May activate PcoR by phosphorylation. In Escherichia coli, this protein is Probable sensor protein PcoS (pcoS).